Consider the following 246-residue polypeptide: Homeobox protein SIX6 (246 aa).

Positions 126–186 form a DNA-binding region, homeobox; the sequence is WDGEQKTHCF…KNRRQRDRAA (61 aa). Positions 190–246 are disordered; that stretch reads NRLQQQVLSQGPGRVLRSEGEGTPEVLGVASSPAASLSSKAATSAISITSSDSECDI. Threonine 212 is subject to Phosphothreonine. The span at 219-246 shows a compositional bias: low complexity; it reads ASSPAASLSSKAATSAISITSSDSECDI. Residues serine 221, serine 225, serine 227, and serine 228 each carry the phosphoserine modification.

It belongs to the SIX/Sine oculis homeobox family. In terms of assembly, interacts with TLE4 and TLE5. In terms of tissue distribution, in the developing embryo, expressed mainly in the ventral optic stalk, optic chiasma, the neural retina and the primordial tissues that give rise to the pituitary/hypothalamus axis. Not expressed in the lens placode.

The protein resides in the nucleus. Functionally, may be involved in eye development. This is Homeobox protein SIX6 (Six6) from Mus musculus (Mouse).